The sequence spans 541 residues: Putative apolipoprotein N-acyltransferase (541 aa).

6 helical membrane passes run 31–51 (PLPA…AAHA), 65–85 (GWLF…VSMH), 89–109 (GLAA…LALF), 144–164 (AACW…FPWL), 181–201 (LLGV…LAGL), and 215–235 (LAAG…QFSW). Positions 248-511 (VQGNVEQSQK…AGVLPVAVQG (264 aa)) constitute a CN hydrolase domain. The active-site Proton acceptor is Glu292. The active site involves Lys366. Cys416 functions as the Nucleophile in the catalytic mechanism.

This sequence belongs to the CN hydrolase family. Apolipoprotein N-acyltransferase subfamily.

The protein localises to the cell inner membrane. It carries out the reaction N-terminal S-1,2-diacyl-sn-glyceryl-L-cysteinyl-[lipoprotein] + a glycerophospholipid = N-acyl-S-1,2-diacyl-sn-glyceryl-L-cysteinyl-[lipoprotein] + a 2-acyl-sn-glycero-3-phospholipid + H(+). It functions in the pathway protein modification; lipoprotein biosynthesis (N-acyl transfer). In terms of biological role, catalyzes the phospholipid dependent N-acylation of the N-terminal cysteine of apolipoprotein, the last step in lipoprotein maturation. The chain is Putative apolipoprotein N-acyltransferase from Bordetella parapertussis (strain 12822 / ATCC BAA-587 / NCTC 13253).